The primary structure comprises 328 residues: Tetraacyldisaccharide 4'-kinase (328 aa).

Position 55 to 62 (55 to 62 (TAGGNGKT)) interacts with ATP.

The protein belongs to the LpxK family.

It carries out the reaction a lipid A disaccharide + ATP = a lipid IVA + ADP + H(+). The protein operates within glycolipid biosynthesis; lipid IV(A) biosynthesis; lipid IV(A) from (3R)-3-hydroxytetradecanoyl-[acyl-carrier-protein] and UDP-N-acetyl-alpha-D-glucosamine: step 6/6. In terms of biological role, transfers the gamma-phosphate of ATP to the 4'-position of a tetraacyldisaccharide 1-phosphate intermediate (termed DS-1-P) to form tetraacyldisaccharide 1,4'-bis-phosphate (lipid IVA). This chain is Tetraacyldisaccharide 4'-kinase, found in Shigella dysenteriae serotype 1 (strain Sd197).